The following is a 1661-amino-acid chain: Cortactin-binding protein 2 (1661 aa).

Disordered stretches follow at residues 1-27 (MATD…AEAT), 206-226 (EKKR…RSTE), 329-438 (TVPV…SLHP), 454-477 (NAND…SPTS), and 493-612 (QALS…LPPK). A coiled-coil region spans residues 124 to 280 (KMQERMSTQL…EQLKRGNDSK (157 aa)). A compositionally biased stretch (low complexity) spans 383-394 (GPSTGSTPDLPS). Over residues 412–426 (SIASQNYSQASSLHS) the composition is skewed to polar residues. Low complexity predominate over residues 454–466 (NANDQDQNGNTTQ). Positions 467–477 (SPPSRDVSPTS) are enriched in polar residues. Arg497 carries the post-translational modification Asymmetric dimethylarginine. ANK repeat units follow at residues 707–737 (GRPT…DINY), 741–770 (DGHS…QVNA), 774–803 (NGFT…NINH), 807–836 (GGQT…DRSV), and 840–869 (DGWT…PACG). The segment at 876–896 (EPESDVFDLDGGGERPEGTVK) is disordered. The stretch at 910–940 (EGWTAAHIAASKGFKNCLEILCQHGGLEPER) is one ANK 6 repeat. Positions 1444–1480 (GKKKGENGAWRKVSTSPRKKSGRFPSPTWSKPDLSDE) are disordered. Ser1522 is subject to Phosphoserine. 2 disordered regions span residues 1555–1597 (RRFD…SNSK) and 1614–1661 (PRSK…KPNK). Over residues 1580–1597 (KEVSPLSSHQTTECSNSK) the composition is skewed to polar residues. Residues 1622–1636 (SQNTRRSSSSSNTRQ) show a composition bias toward low complexity. Residues 1643–1661 (SKDEIWNLRKNEQVEKPNK) show a composition bias toward basic and acidic residues.

Interacts with CTTN/cortactin SH3 domain. Interacts with STRN, STRN4/zinedin and MOB4/phocein; this interactions mediate the association with the STRIPAK core complex and may regulate dendritic spine distribution of the STRIPAK complex in hippocampal neurons. Activation of glutamate receptors weakens the interaction with STRN and STRN4.

It is found in the cytoplasm. Its subcellular location is the cell cortex. It localises to the cell projection. The protein resides in the dendritic spine. In terms of biological role, regulates the dendritic spine distribution of CTTN/cortactin in hippocampal neurons, and thus controls dendritic spinogenesis and dendritic spine maintenance. Associates with the striatin-interacting phosphatase and kinase (STRIPAK) core complex to regulate dendritic spine distribution of the STRIPAK complex in hippocampal neurons. This is Cortactin-binding protein 2 (CTTNBP2) from Loxodonta africana (African elephant).